The chain runs to 145 residues: Histone H3-like centromeric protein A (145 aa).

The span at Met-1–Ser-19 shows a compositional bias: basic residues. The disordered stretch occupies residues Met-1–Arg-54. A Phosphoserine modification is found at Ser-19. Residues Pro-51–Met-145 form an H3-like region.

The protein belongs to the histone H3 family. Component of centromeric nucleosomes, where DNA is wrapped around a histone octamer core. The octamer contains two molecules each of H2A, H2B, CENPA and H4 assembled in one CENPA-H4 heterotetramer and two H2A-H2B heterodimers. CENPA modulates the DNA-binding characteristics of nucleosomes so that protruding DNA ends have higher flexibility than in nucleosomes containing conventional histone H3.

The protein localises to the nucleus. It is found in the chromosome. Its subcellular location is the centromere. Functionally, histone H3-like nucleosomal protein that is specifically found in centromeric nucleosomes. Replaces conventional H3 in the nucleosome core of centromeric chromatin that serves as an assembly site for the inner kinetochore. The presence of CENPA subtly modifies the nucleosome structure and the way DNA is wrapped around the nucleosome and gives rise to protruding DNA ends that are less well-ordered and rigid compared to nucleosomes containing histone H3. May serve as an epigenetic mark that propagates centromere identity through replication and cell division. Required for recruitment and assembly of kinetochore proteins, and as a consequence required for progress through mitosis, chromosome segregation and cytokinesis. The protein is Histone H3-like centromeric protein A (cenpa) of Danio rerio (Zebrafish).